The chain runs to 322 residues: Replication factor C small subunit (322 aa).

Position 46 to 53 (46 to 53 (GSAGIGKT)) interacts with ATP.

It belongs to the activator 1 small subunits family. RfcS subfamily. In terms of assembly, heteromultimer composed of small subunits (RfcS) and large subunits (RfcL).

In terms of biological role, part of the RFC clamp loader complex which loads the PCNA sliding clamp onto DNA. The sequence is that of Replication factor C small subunit from Methanoculleus marisnigri (strain ATCC 35101 / DSM 1498 / JR1).